A 336-amino-acid chain; its full sequence is Fructose-1,6-bisphosphatase class 2 (336 aa).

Aspartate 33, glutamate 57, aspartate 85, and glutamate 88 together coordinate Mn(2+). Substrate is bound by residues 88 to 90 (EGT), tyrosine 119, 164 to 166 (KPR), 186 to 188 (DGD), and glycine 210. Glutamate 213 contacts Mn(2+).

This sequence belongs to the FBPase class 2 family. As to quaternary structure, homodimer. Requires Mn(2+) as cofactor.

The protein localises to the cytoplasm. The catalysed reaction is beta-D-fructose 1,6-bisphosphate + H2O = beta-D-fructose 6-phosphate + phosphate. It participates in carbohydrate biosynthesis; gluconeogenesis. In terms of biological role, catalyzes the hydrolysis of fructose 1,6-bisphosphate to fructose 6-phosphate. The protein is Fructose-1,6-bisphosphatase class 2 (glpX) of Shigella flexneri.